Consider the following 234-residue polypeptide: Probable chemoreceptor glutamine deamidase CheD (234 aa).

It belongs to the CheD family.

It catalyses the reaction L-glutaminyl-[protein] + H2O = L-glutamyl-[protein] + NH4(+). Probably deamidates glutamine residues to glutamate on methyl-accepting chemotaxis receptors (MCPs), playing an important role in chemotaxis. The chain is Probable chemoreceptor glutamine deamidase CheD from Burkholderia mallei (strain NCTC 10247).